A 360-amino-acid polypeptide reads, in one-letter code: Phospho-N-acetylmuramoyl-pentapeptide-transferase (360 aa).

10 helical membrane-spanning segments follow: residues 21-41 (YLTLRGILGILTALVISFIVG), 70-90 (GTPTMGGALILVTITVSTLLW), 97-117 (YVWAVLLVTLAYGLIGFVDDY), 134-154 (YLWQSVFGLGAALFLYHTASS), 168-188 (VVLNMGWLYVPLVYFVVVGSS), 199-219 (GLAILPTVLVAGGLAIFAYAS), 236-256 (AGELVVFCGALVGAGLGFLWF), 263-283 (VFMGDIGALALGAALGMVAVL), 288-308 (IVLMIMGGIFVMETVSVMLQV), and 338-358 (VIVRFWIISVILVLIGLATLK).

The protein belongs to the glycosyltransferase 4 family. MraY subfamily. Mg(2+) is required as a cofactor.

It localises to the cell inner membrane. It carries out the reaction UDP-N-acetyl-alpha-D-muramoyl-L-alanyl-gamma-D-glutamyl-meso-2,6-diaminopimeloyl-D-alanyl-D-alanine + di-trans,octa-cis-undecaprenyl phosphate = di-trans,octa-cis-undecaprenyl diphospho-N-acetyl-alpha-D-muramoyl-L-alanyl-D-glutamyl-meso-2,6-diaminopimeloyl-D-alanyl-D-alanine + UMP. Its pathway is cell wall biogenesis; peptidoglycan biosynthesis. Functionally, catalyzes the initial step of the lipid cycle reactions in the biosynthesis of the cell wall peptidoglycan: transfers peptidoglycan precursor phospho-MurNAc-pentapeptide from UDP-MurNAc-pentapeptide onto the lipid carrier undecaprenyl phosphate, yielding undecaprenyl-pyrophosphoryl-MurNAc-pentapeptide, known as lipid I. The polypeptide is Phospho-N-acetylmuramoyl-pentapeptide-transferase (Methylococcus capsulatus (strain ATCC 33009 / NCIMB 11132 / Bath)).